Reading from the N-terminus, the 263-residue chain is 3-methyl-2-oxobutanoate hydroxymethyltransferase (263 aa).

Mg(2+) is bound by residues aspartate 45 and aspartate 84. Residues 45-46, aspartate 84, and lysine 112 contribute to the 3-methyl-2-oxobutanoate site; that span reads DS. Glutamate 114 contacts Mg(2+). Glutamate 180 functions as the Proton acceptor in the catalytic mechanism.

This sequence belongs to the PanB family. As to quaternary structure, homodecamer; pentamer of dimers. Mg(2+) serves as cofactor.

The protein localises to the cytoplasm. It catalyses the reaction 3-methyl-2-oxobutanoate + (6R)-5,10-methylene-5,6,7,8-tetrahydrofolate + H2O = 2-dehydropantoate + (6S)-5,6,7,8-tetrahydrofolate. It participates in cofactor biosynthesis; (R)-pantothenate biosynthesis; (R)-pantoate from 3-methyl-2-oxobutanoate: step 1/2. Its function is as follows. Catalyzes the reversible reaction in which hydroxymethyl group from 5,10-methylenetetrahydrofolate is transferred onto alpha-ketoisovalerate to form ketopantoate. The polypeptide is 3-methyl-2-oxobutanoate hydroxymethyltransferase (Enterobacter sp. (strain 638)).